We begin with the raw amino-acid sequence, 1106 residues long: DNA polymerase delta catalytic subunit (1106 aa).

The disordered stretch occupies residues 1-28 (MDGKRRPGPGPGVPPKRARGGLWDEDEA). The Nuclear localization signal signature appears at 4–19 (KRRPGPGPGVPPKRAR). Arginine 19 is subject to Omega-N-methylarginine. Residue lysine 573 forms a Glycyl lysine isopeptide (Lys-Gly) (interchain with G-Cter in SUMO2) linkage. Residues cysteine 1011, cysteine 1014, cysteine 1025, and cysteine 1028 each contribute to the Zn(2+) site. The segment at 1011–1028 (CIGCRTVLSHQGAVCKFC) adopts a CysA-type zinc-finger fold. Residues cysteine 1057, cysteine 1060, cysteine 1070, and cysteine 1075 each contribute to the [4Fe-4S] cluster site. The short motif at 1057–1075 (CQRCQGSLHEDVICTSRDC) is the CysB motif element.

It belongs to the DNA polymerase type-B family. As to quaternary structure, component of the tetrameric DNA polymerase delta complex (Pol-delta4), which consists of POLD1/p125, POLD2/p50, POLD3/p66/p68 and POLD4/p12, with POLD1 bearing both DNA polymerase and 3' to 5' proofreading exonuclease activities. Within Pol-delta4, directly interacts with POLD2 and POLD4. Following genotoxic stress by DNA-damaging agents, such as ultraviolet light and methyl methanesulfonate, or by replication stress induced by treatment with hydroxyurea or aphidicolin, Pol-delta4 is converted into a trimeric form of the complex (Pol-delta3) by POLD4 degradation. Pol-delta3 is the major form at S phase replication sites and DNA damage sites. POLD1 displays different catalytic properties depending upon the complex it is found in. It exhibits higher proofreading activity and fidelity than Pol-delta4, making it particularly well suited to respond to DNA damage. Directly interacts with PCNA, as do POLD3 and POLD4; this interaction stimulates Pol-delta4 polymerase activity. As POLD2 and POLD4, directly interacts with WRNIP1; this interaction stimulates DNA polymerase delta-mediated DNA synthesis, independently of the presence of PCNA. This stimulation may be due predominantly to an increase of initiation frequency and also to increased processivity. Also observed as a dimeric complex with POLD2 (Pol-delta2). Pol-delta2 is relatively insensitive to the PCNA stimulation (2-5-fold) compared to Pol-delta4 that is stimulated by over 50-fold. Interacts with POLDIP2; this interaction is indirect and most probably mediated through POLD2-binding. Interacts with CIAO1. Interacts with POLDIP2. Interacts with RFC1. [4Fe-4S] cluster is required as a cofactor.

Its subcellular location is the nucleus. It carries out the reaction DNA(n) + a 2'-deoxyribonucleoside 5'-triphosphate = DNA(n+1) + diphosphate. Its activity is regulated as follows. Regulated by alteration of quaternary structure. Exhibits burst rates of DNA synthesis are about 5 times faster in the presence of POLD4 (Pol-delta4 complex) than in its absence (Pol-delta3 complex), while the affinity of the enzyme for its DNA and dNTP substrates appears unchanged. The Pol-delta3 complex is more likely to proofread DNA synthesis because it cleaves single-stranded DNA twice as fast and transfers mismatched DNA from the polymerase to the exonuclease sites 9 times faster compared to the Pol-delta3 complex. Pol-delta3 also extends mismatched primers 3 times more slowly in the absence of POLD4. The conversion of Pol-delta4 into Pol-delta3 is induced by genotoxic stress or by replication stress leading POLD4 degradation. Stimulated in the presence of PCNA. This stimulation is further increased in the presence of KCTD13/PDIP1, most probably via direct interaction between KCTD13 and POLD2. In terms of biological role, as the catalytic component of the trimeric (Pol-delta3 complex) and tetrameric DNA polymerase delta complexes (Pol-delta4 complex), plays a crucial role in high fidelity genome replication, including in lagging strand synthesis, and repair. Exhibits both DNA polymerase and 3'- to 5'-exonuclease activities. Requires the presence of accessory proteins POLD2, POLD3 and POLD4 for full activity. Depending upon the absence (Pol-delta3) or the presence of POLD4 (Pol-delta4), displays differences in catalytic activity. Most notably, expresses higher proofreading activity in the context of Pol-delta3 compared with that of Pol-delta4. Although both Pol-delta3 and Pol-delta4 process Okazaki fragments in vitro, Pol-delta3 may be better suited to fulfill this task, exhibiting near-absence of strand displacement activity compared to Pol-delta4 and stalling on encounter with the 5'-blocking oligonucleotides. Pol-delta3 idling process may avoid the formation of a gap, while maintaining a nick that can be readily ligated. Along with DNA polymerase kappa, DNA polymerase delta carries out approximately half of nucleotide excision repair (NER) synthesis following UV irradiation. Under conditions of DNA replication stress, in the presence of POLD3 and POLD4, may catalyze the repair of broken replication forks through break-induced replication (BIR). Involved in the translesion synthesis (TLS) of templates carrying O6-methylguanine, 8oxoG or abasic sites. The protein is DNA polymerase delta catalytic subunit (POLD1) of Bos taurus (Bovine).